The sequence spans 314 residues: Olfactory receptor 4Q2 (314 aa).

Over 1 to 26 (MDKNQTEVMREFFLSGFSQTPSIEAG) the chain is Extracellular. Asn-4 carries N-linked (GlcNAc...) asparagine glycosylation. A helical membrane pass occupies residues 27–47 (LFVLFLFFYMSIWVGNVLIMV). Residues 48 to 61 (TVASDKYLNSSPMY) are Cytoplasmic-facing. The helical transmembrane segment at 62–84 (FLLGNLSFLDLCYSTVTTPKLLA) threads the bilayer. Residues 85 to 98 (DFFNHEKLISYDQC) lie on the Extracellular side of the membrane. Residues Cys-98 and Cys-181 are joined by a disulfide bond. The helical transmembrane segment at 99–119 (IVQLFFLHFVGAAEMFLLTVM) threads the bilayer. Topologically, residues 120–142 (AYDRYVAICRPLHYTTVMSRGLC) are cytoplasmic. The chain crosses the membrane as a helical span at residues 143–163 (CVLVAASWMGGFVHSTVQTIL). At 164–196 (TVHLPFCGPNQVENTFFCDVPPVIKLACADTFV) the chain is on the extracellular side. Residues 197–217 (IELLMVSNSGLISTISFVVLI) traverse the membrane as a helical segment. The Cytoplasmic segment spans residues 218–236 (SSYTTILVKIRSKEGRRKA). A helical membrane pass occupies residues 237–257 (LSTCASHLMVVTLFFGPCIFI). Residues 258–268 (YARPFSTFSVD) are Extracellular-facing. A helical transmembrane segment spans residues 269 to 289 (KMVSVLYNVITPMLNPLIYTL). Over 290 to 314 (RNKEVKSAMQKLWVRNGLTWKKQET) the chain is Cytoplasmic.

It belongs to the G-protein coupled receptor 1 family.

The protein localises to the cell membrane. In terms of biological role, odorant receptor. In Homo sapiens (Human), this protein is Olfactory receptor 4Q2 (OR4Q2).